Here is a 224-residue protein sequence, read N- to C-terminus: DeSI-like protein At4g17486 (224 aa).

Residues threonine 26–isoleucine 163 form the PPPDE domain. Catalysis depends on residues histidine 51 and cysteine 125. Residues glutamate 176–isoleucine 201 form a disordered region.

This sequence belongs to the DeSI family.

The polypeptide is DeSI-like protein At4g17486 (Arabidopsis thaliana (Mouse-ear cress)).